A 74-amino-acid polypeptide reads, in one-letter code: Protein F9 homolog (74 aa).

Topologically, residues 1–34 (GHAAANCALARVATALTRRVPASRHGLAEGGTPP) are virion surface. Residues 35-55 (WTLLLAVAAVAVLGVVAISLL) form a helical membrane-spanning segment. At 56–73 (RRALRIRFRYSKSIQTLR) the chain is on the intravirion side.

It belongs to the chordopoxvirinae L1 protein family.

The protein resides in the virion membrane. The sequence is that of Protein F9 homolog from Capra hircus (Goat).